Here is a 177-residue protein sequence, read N- to C-terminus: MKLPKEGDFITIQSYKHDGSLHRTWRDTMVLKTTENAIIGVNDHTLVTESDGRRWVTREPAIVYFHKKYWFNIIAMIRDNGTSYYCNVASPYYLDEEALKYIDYDLDVKIFTDGEKRLLDVEEYERHKRKMNYSDDLDYILKEHVKILVDWINNGRGPFSEAYVNIWYKRYVELKNR.

The Proton donor role is filled by arginine 23. Mg(2+) is bound by residues asparagine 87, aspartate 103, aspartate 105, aspartate 107, aspartate 120, and glutamate 123.

It belongs to the Ntdp family. The cofactor is Mg(2+).

The enzyme catalyses a ribonucleoside 5'-triphosphate + H2O = a ribonucleoside 5'-diphosphate + phosphate + H(+). It catalyses the reaction a ribonucleoside 5'-diphosphate + H2O = a ribonucleoside 5'-phosphate + phosphate + H(+). Functionally, has nucleoside phosphatase activity towards nucleoside triphosphates and nucleoside diphosphates. This Streptococcus pneumoniae (strain ATCC 700669 / Spain 23F-1) protein is Nucleoside triphosphate/diphosphate phosphatase.